The primary structure comprises 585 residues: Arginine--tRNA ligase (585 aa).

Residues 131–141 carry the 'HIGH' region motif; the sequence is ANPTGPMHVGH.

Belongs to the class-I aminoacyl-tRNA synthetase family. Monomer.

It is found in the cytoplasm. It catalyses the reaction tRNA(Arg) + L-arginine + ATP = L-arginyl-tRNA(Arg) + AMP + diphosphate. This chain is Arginine--tRNA ligase, found in Allorhizobium ampelinum (strain ATCC BAA-846 / DSM 112012 / S4) (Agrobacterium vitis (strain S4)).